The primary structure comprises 183 residues: ESX-1 secretion-associated protein EspH (183 aa).

Positions 1–16 are enriched in acidic residues; the sequence is MVDPPGNDDDHGDLDA. Positions 1-32 are disordered; it reads MVDPPGNDDDHGDLDALDFSAAHTNEASPLDA.

The protein is ESX-1 secretion-associated protein EspH of Mycobacterium tuberculosis (strain ATCC 25618 / H37Rv).